Consider the following 128-residue polypeptide: Flagellar basal body rod protein FlgB (128 aa).

The protein belongs to the flagella basal body rod proteins family. In terms of assembly, the basal body constitutes a major portion of the flagellar organelle and consists of a number of rings mounted on a central rod. In Gram-negative bacteria, at least four rings, L, P, S and M are present, whereas Gram-positive bacteria lack the L and P rings. The rod consists of about 26 subunits of FlgG in the distal portion, and FlgB, FlgC and FlgF build up the proximal portion of the rod with about 6 subunits each. Rod assembly occurs by export via the flagellum-specific pathway of its constituent proteins and by their incorporation into the rod structure in the probable order of FlgB, FlgC, FlgF and FlgG. Another protein, FliE, also assembles onto the stable rod structure.

It is found in the bacterial flagellum basal body. Its function is as follows. Structural component of flagellum, the bacterial motility apparatus. Part of the rod structure of flagellar basal body. The chain is Flagellar basal body rod protein FlgB from Cereibacter sphaeroides (strain ATCC 17023 / DSM 158 / JCM 6121 / CCUG 31486 / LMG 2827 / NBRC 12203 / NCIMB 8253 / ATH 2.4.1.) (Rhodobacter sphaeroides).